We begin with the raw amino-acid sequence, 91 residues long: uncharacterized protein (91 aa).

This is an uncharacterized protein from Bacillus anthracis.